The primary structure comprises 246 residues: MTHSNRMLLGVNIDHVATLRQARGTRYPDPVKAALDAEEAGADGITVHLREDRRHIQERDVVLLKDVLQTRMNFEMGVTEEMMAFAEKIRPAHICLVPETRQELTTEGGLDVAGQEARIKAAVERLSRTGAEVSLFIDADERQIEASRRVGAPAIELHTGRYADAQTPTEVAEELKRIVDGVAFGVAQGLIVNAGHGLHYHNVEAVAAIKGINELNIGHALVAHALFVGFKAAVAEMKALIVAASR.

Asparagine 12 lines the 3-amino-2-oxopropyl phosphate pocket. 14 to 15 is a binding site for 1-deoxy-D-xylulose 5-phosphate; sequence DH. Arginine 23 contributes to the 3-amino-2-oxopropyl phosphate binding site. Catalysis depends on histidine 48, which acts as the Proton acceptor. 1-deoxy-D-xylulose 5-phosphate-binding residues include arginine 50 and histidine 55. The active-site Proton acceptor is the glutamate 75. A 1-deoxy-D-xylulose 5-phosphate-binding site is contributed by threonine 105. Catalysis depends on histidine 196, which acts as the Proton donor. Residues glycine 197 and 218–219 contribute to the 3-amino-2-oxopropyl phosphate site; that span reads GH.

The protein belongs to the PNP synthase family. Homooctamer; tetramer of dimers.

It localises to the cytoplasm. The catalysed reaction is 3-amino-2-oxopropyl phosphate + 1-deoxy-D-xylulose 5-phosphate = pyridoxine 5'-phosphate + phosphate + 2 H2O + H(+). It participates in cofactor biosynthesis; pyridoxine 5'-phosphate biosynthesis; pyridoxine 5'-phosphate from D-erythrose 4-phosphate: step 5/5. Its function is as follows. Catalyzes the complicated ring closure reaction between the two acyclic compounds 1-deoxy-D-xylulose-5-phosphate (DXP) and 3-amino-2-oxopropyl phosphate (1-amino-acetone-3-phosphate or AAP) to form pyridoxine 5'-phosphate (PNP) and inorganic phosphate. The polypeptide is Pyridoxine 5'-phosphate synthase (Pseudomonas putida (strain W619)).